The following is a 350-amino-acid chain: Phosphotriesterase-related protein (350 aa).

A divalent metal cation contacts are provided by His-22, His-24, Glu-169, His-201, His-230, and Asp-298.

Belongs to the metallo-dependent hydrolases superfamily. Phosphotriesterase family. A divalent metal cation serves as cofactor.

This is Phosphotriesterase-related protein from Drosophila ananassae (Fruit fly).